A 219-amino-acid chain; its full sequence is Dynein light chain Tctex-type 4 (219 aa).

The tract at residues 1 to 84 (MACRTLPSRR…RRPSLGPVPP (84 aa)) is disordered. A compositionally biased stretch (basic and acidic residues) spans 9–20 (RRQEEETTKDLA). S64 is subject to Phosphoserine.

This sequence belongs to the dynein light chain Tctex-type family. Interacts with ENG/endoglin, TGFBR2 and TGFBR3. Interacts with PPP1CC.

It is found in the cell projection. The protein localises to the cilium. The protein resides in the flagellum. Its subcellular location is the cytoplasmic vesicle. It localises to the secretory vesicle. It is found in the acrosome. The protein localises to the cytoplasm. The protein resides in the cytoskeleton. Its subcellular location is the cilium axoneme. It localises to the nucleus. It is found in the microtubule organizing center. The sequence is that of Dynein light chain Tctex-type 4 (Dynlt4) from Mus musculus (Mouse).